Reading from the N-terminus, the 527-residue chain is Amine oxidase [flavin-containing] A (527 aa).

Met-1 carries the post-translational modification N-acetylmethionine. The Cytoplasmic portion of the chain corresponds to 1–497 (MESLQKTSDA…PSFWERNLPS (497 aa)). Residue Ser-383 is modified to Phosphoserine. Cys-406 bears the S-8alpha-FAD cysteine mark. Residues 498-518 (VSGLLKIVGFSTSITALWFVM) form a helical; Anchor for type IV membrane protein membrane-spanning segment. Topologically, residues 519–527 (YRFRLLSRS) are mitochondrial intermembrane. The interval 520 to 522 (RFR) is interaction with membrane phospholipid headgroups.

The protein belongs to the flavin monoamine oxidase family. As to quaternary structure, monomer, homo- or heterodimer (containing two subunits of similar size). Each subunit contains a covalently bound flavin. Enzymatically active as monomer. It depends on FAD as a cofactor.

Its subcellular location is the mitochondrion outer membrane. It carries out the reaction a secondary aliphatic amine + O2 + H2O = a primary amine + an aldehyde + H2O2. It catalyses the reaction a primary methyl amine + O2 + H2O = an aldehyde + H2O2 + NH4(+). The enzyme catalyses (R)-adrenaline + O2 + H2O = (R)-3,4-dihydroxymandelaldehyde + methylamine + H2O2. The catalysed reaction is dopamine + O2 + H2O = 3,4-dihydroxyphenylacetaldehyde + H2O2 + NH4(+). It carries out the reaction tyramine + O2 + H2O = (4-hydroxyphenyl)acetaldehyde + H2O2 + NH4(+). It catalyses the reaction (R)-noradrenaline + O2 + H2O = (R)-3,4-dihydroxymandelaldehyde + H2O2 + NH4(+). The enzyme catalyses serotonin + O2 + H2O = (5-hydroxyindol-3-yl)acetaldehyde + H2O2 + NH4(+). The catalysed reaction is kynuramine + O2 + H2O = 3-(2-aminophenyl)-3-oxopropanal + H2O2 + NH4(+). It carries out the reaction tryptamine + O2 + H2O = indole-3-acetaldehyde + H2O2 + NH4(+). It catalyses the reaction 2-phenylethylamine + O2 + H2O = 2-phenylacetaldehyde + H2O2 + NH4(+). In terms of biological role, catalyzes the oxidative deamination of primary and some secondary amine such as neurotransmitters, with concomitant reduction of oxygen to hydrogen peroxide and has important functions in the metabolism of neuroactive and vasoactive amines in the central nervous system and peripheral tissues. Preferentially oxidizes serotonin. Also catalyzes the oxidative deamination of kynuramine to 3-(2-aminophenyl)-3-oxopropanal that can spontaneously condense to 4-hydroxyquinoline. This is Amine oxidase [flavin-containing] A from Bos taurus (Bovine).